Reading from the N-terminus, the 924-residue chain is WSC domain-containing protein ARB_07867 (924 aa).

Positions 1–24 (MAGILSVVHIIIIFIVRFKSSTDS) are cleaved as a signal peptide. The region spanning 62-160 (TWTYLGCYTD…PGRLNLYQNT (99 aa)) is the WSC 1 domain. Asparagine 90 carries an N-linked (GlcNAc...) asparagine glycan. The interval 166 to 190 (DTMTTSAPSTETGSPTTTSVPEPTQ) is disordered. A compositionally biased stretch (low complexity) spans 169–189 (TTSAPSTETGSPTTTSVPEPT). A WSC 2 domain is found at 195–289 (GWQYSGCYQD…PSRLSVYSKG (95 aa)). N-linked (GlcNAc...) asparagine glycosylation is found at asparagine 290, asparagine 333, asparagine 387, asparagine 455, asparagine 552, asparagine 758, and asparagine 833. Residues 307 to 404 (GWKYQGCLQD…GNLITYYRWM (98 aa)) form the WSC 3 domain.

It localises to the secreted. In Arthroderma benhamiae (strain ATCC MYA-4681 / CBS 112371) (Trichophyton mentagrophytes), this protein is WSC domain-containing protein ARB_07867.